Here is a 465-residue protein sequence, read N- to C-terminus: 2-halobenzoate 1,2-dioxygenase large subunit (465 aa).

The Rieske domain occupies 56–154 (WVFLAHESQV…GFNVDGSHDL (99 aa)). C98, H100, C118, and H121 together coordinate [2Fe-2S] cluster. Fe cation is bound by residues H227 and H232.

Belongs to the bacterial ring-hydroxylating dioxygenase alpha subunit family. As to quaternary structure, heterohexamer of 3 large (CbdA) subunits and 3 small (CbdB) subunits. The heterohexamer is part of 2-halobenzoate dioxygenase two component enzyme system. The other component is a NADH:acceptor reductase (CdbC). The cofactor is [2Fe-2S] cluster. Fe(2+) is required as a cofactor.

The enzyme catalyses a 2-halobenzoate + NADH + O2 + H(+) = a halide anion + catechol + CO2 + NAD(+). It participates in xenobiotic degradation; benzoate degradation via CoA ligation. Component of 2-halobenzoate dioxygenase multicomponent enzyme system which catalyzes the incorporation of both atoms of molecular oxygen into 2-halobenzoate to form catechol. This chain is 2-halobenzoate 1,2-dioxygenase large subunit (cbdA), found in Burkholderia cepacia (Pseudomonas cepacia).